The primary structure comprises 695 residues: Elongation factor G (695 aa).

One can recognise a tr-type G domain in the interval 12–286 (DKIRNIGIMA…AVIDYLPSPL (275 aa)). GTP contacts are provided by residues 21–28 (AHIDAGKT), 85–89 (DTPGH), and 139–142 (NKMD).

Belongs to the TRAFAC class translation factor GTPase superfamily. Classic translation factor GTPase family. EF-G/EF-2 subfamily.

The protein localises to the cytoplasm. In terms of biological role, catalyzes the GTP-dependent ribosomal translocation step during translation elongation. During this step, the ribosome changes from the pre-translocational (PRE) to the post-translocational (POST) state as the newly formed A-site-bound peptidyl-tRNA and P-site-bound deacylated tRNA move to the P and E sites, respectively. Catalyzes the coordinated movement of the two tRNA molecules, the mRNA and conformational changes in the ribosome. The protein is Elongation factor G of Thermotoga neapolitana (strain ATCC 49049 / DSM 4359 / NBRC 107923 / NS-E).